The chain runs to 927 residues: Transmembrane protein 132 homolog (927 aa).

An N-terminal signal peptide occupies residues 1-18; it reads MLKKLWICISCIVTTALS. Residues 749 to 769 traverse the membrane as a helical segment; sequence FHIFVLTIIGLIILFLFISFV. Residues 789–842 are disordered; sequence LSSSSGSNSRQEETNEWVWLSQPQPPSSTISSGYSGNKSTAERQSSNGDDPSRT. Over residues 817-842 the composition is skewed to polar residues; that stretch reads TISSGYSGNKSTAERQSSNGDDPSRT.

The protein belongs to the TMEM132 family. In terms of assembly, interacts with gex-3. Specifically expressed in neurons.

It is found in the membrane. Functionally, regulates neuronal morphology via inhibition of the WAVE regulatory complex (WCR), a complex that controls F-actin cytoskeletal dynamics. The chain is Transmembrane protein 132 homolog from Caenorhabditis elegans.